A 166-amino-acid chain; its full sequence is HTH-type transcriptional regulator rot (166 aa).

Positions 87–110 (LKEMDRFVEVKPYKRTRTYNNLVE) form a DNA-binding region, H-T-H motif.

Belongs to the rot family.

In terms of biological role, global regulator with both positive and negative effects that mediates modulation of several genes involved in virulence. Also, modulates the expression of genes not previously implicated in pathogenesis. The polypeptide is HTH-type transcriptional regulator rot (rot) (Staphylococcus aureus (strain MRSA252)).